A 171-amino-acid polypeptide reads, in one-letter code: Calcium-binding protein F-like (171 aa).

EF-hand domains follow at residues 6 to 41, 57 to 80, 89 to 124, and 130 to 159; these read KIFE…KMNG, IDMD…KAKK, AALA…RGYT, and DQYL…RRID. The Ca(2+) site is built by D19, N21, D23, S25, and D30. D102, D104, D106, K108, E113, D137, D139, D141, C143, and E148 together coordinate Ca(2+).

This chain is Calcium-binding protein F-like (cbp12), found in Dictyostelium discoideum (Social amoeba).